A 323-amino-acid polypeptide reads, in one-letter code: Aldo-keto reductase family 1 member C13 (323 aa).

NAD(+)-binding positions include 20–24, D50, and Y55; that span reads GFGTY. Catalysis depends on Y55, which acts as the Proton donor. H117 is a binding site for substrate. Residues 166–167, Q190, 216–224, and 270–280 each bind NAD(+); these read SN, YGALGTQRY, and QSFKENEMREN.

It belongs to the aldo/keto reductase family.

Functionally, catalyzes the dehydrogenation of 17-beta-hydroxysteroids. May also exhibit significant activity with a variety of cyclic and alicyclic alcohols. Uses both NAD and NADP, but the activity is much greater with NAD than with NADP. The protein is Aldo-keto reductase family 1 member C13 (Akr1c13) of Mus musculus (Mouse).